Reading from the N-terminus, the 467-residue chain is ATP synthase subunit beta (467 aa).

Glycine 152–threonine 159 provides a ligand contact to ATP.

This sequence belongs to the ATPase alpha/beta chains family. In terms of assembly, F-type ATPases have 2 components, CF(1) - the catalytic core - and CF(0) - the membrane proton channel. CF(1) has five subunits: alpha(3), beta(3), gamma(1), delta(1), epsilon(1). CF(0) has three main subunits: a(1), b(2) and c(9-12). The alpha and beta chains form an alternating ring which encloses part of the gamma chain. CF(1) is attached to CF(0) by a central stalk formed by the gamma and epsilon chains, while a peripheral stalk is formed by the delta and b chains.

The protein localises to the cell membrane. The catalysed reaction is ATP + H2O + 4 H(+)(in) = ADP + phosphate + 5 H(+)(out). In terms of biological role, produces ATP from ADP in the presence of a proton gradient across the membrane. The catalytic sites are hosted primarily by the beta subunits. The chain is ATP synthase subunit beta from Caldicellulosiruptor bescii (strain ATCC BAA-1888 / DSM 6725 / KCTC 15123 / Z-1320) (Anaerocellum thermophilum).